The chain runs to 465 residues: Methylenetetrahydrofolate--tRNA-(uracil-5-)-methyltransferase TrmFO (465 aa).

10–15 (GAGLAG) is an FAD binding site.

Belongs to the MnmG family. TrmFO subfamily. It depends on FAD as a cofactor.

The protein resides in the cytoplasm. The enzyme catalyses uridine(54) in tRNA + (6R)-5,10-methylene-5,6,7,8-tetrahydrofolate + NADH + H(+) = 5-methyluridine(54) in tRNA + (6S)-5,6,7,8-tetrahydrofolate + NAD(+). The catalysed reaction is uridine(54) in tRNA + (6R)-5,10-methylene-5,6,7,8-tetrahydrofolate + NADPH + H(+) = 5-methyluridine(54) in tRNA + (6S)-5,6,7,8-tetrahydrofolate + NADP(+). Its function is as follows. Catalyzes the folate-dependent formation of 5-methyl-uridine at position 54 (M-5-U54) in all tRNAs. This is Methylenetetrahydrofolate--tRNA-(uracil-5-)-methyltransferase TrmFO from Deinococcus radiodurans (strain ATCC 13939 / DSM 20539 / JCM 16871 / CCUG 27074 / LMG 4051 / NBRC 15346 / NCIMB 9279 / VKM B-1422 / R1).